Consider the following 498-residue polypeptide: ATP synthase subunit beta, chloroplastic (498 aa).

An ATP-binding site is contributed by 172–179; that stretch reads GGAGVGKT.

This sequence belongs to the ATPase alpha/beta chains family. F-type ATPases have 2 components, CF(1) - the catalytic core - and CF(0) - the membrane proton channel. CF(1) has five subunits: alpha(3), beta(3), gamma(1), delta(1), epsilon(1). CF(0) has four main subunits: a(1), b(1), b'(1) and c(9-12).

It is found in the plastid. The protein resides in the chloroplast thylakoid membrane. The enzyme catalyses ATP + H2O + 4 H(+)(in) = ADP + phosphate + 5 H(+)(out). Functionally, produces ATP from ADP in the presence of a proton gradient across the membrane. The catalytic sites are hosted primarily by the beta subunits. The sequence is that of ATP synthase subunit beta, chloroplastic from Oryza nivara (Indian wild rice).